Here is a 248-residue protein sequence, read N- to C-terminus: Exosome complex component Rrp41 (248 aa).

It belongs to the RNase PH family. Rrp41 subfamily. Component of the archaeal exosome complex. Forms a hexameric ring-like arrangement composed of 3 Rrp41-Rrp42 heterodimers. The hexameric ring associates with a trimer of Rrp4 and/or Csl4 subunits.

It localises to the cytoplasm. Its function is as follows. Catalytic component of the exosome, which is a complex involved in RNA degradation. Has 3'-&gt;5' exoribonuclease activity. Can also synthesize heteromeric RNA-tails. This Thermoplasma volcanium (strain ATCC 51530 / DSM 4299 / JCM 9571 / NBRC 15438 / GSS1) protein is Exosome complex component Rrp41.